The primary structure comprises 483 residues: MORN repeat-containing protein 1 (483 aa).

A Phosphoserine modification is found at serine 18. 7 MORN repeats span residues 39–61 (YEGE…DGSY), 62–84 (YEGE…WSGN), 86–108 (YSGQ…AGGH), 109–131 (YEGE…DGQV), 132–154 (YQGS…NGDK), 155–177 (YEGD…DGST), and 178–200 (YKGQ…SGVT). A disordered region spans residues 392–427 (EKAGNRPKGDRSPPEVLSTAQEPLRGTNRSDGTTAE). Basic and acidic residues predominate over residues 394-404 (AGNRPKGDRSP). The residue at position 403 (serine 403) is a Phosphoserine. Over residues 418–427 (TNRSDGTTAE) the composition is skewed to polar residues.

This Rattus norvegicus (Rat) protein is MORN repeat-containing protein 1 (Morn1).